A 193-amino-acid polypeptide reads, in one-letter code: dCTP deaminase (193 aa).

DCTP-binding positions include 110-115, Asp128, 136-138, Tyr171, Lys178, and Gln182; these read RSSLAR and VLE. Residue Glu138 is the Proton donor/acceptor of the active site. The tract at residues 174-193 is disordered; the sequence is RKSAKYKDQQEAVASRISQD.

This sequence belongs to the dCTP deaminase family. Homotrimer.

The catalysed reaction is dCTP + H2O + H(+) = dUTP + NH4(+). Its pathway is pyrimidine metabolism; dUMP biosynthesis; dUMP from dCTP (dUTP route): step 1/2. Its function is as follows. Catalyzes the deamination of dCTP to dUTP. The sequence is that of dCTP deaminase from Shewanella baltica (strain OS223).